A 186-amino-acid chain; its full sequence is Elongation factor P (186 aa).

The protein belongs to the elongation factor P family.

The protein resides in the cytoplasm. The protein operates within protein biosynthesis; polypeptide chain elongation. Its function is as follows. Involved in peptide bond synthesis. Stimulates efficient translation and peptide-bond synthesis on native or reconstituted 70S ribosomes in vitro. Probably functions indirectly by altering the affinity of the ribosome for aminoacyl-tRNA, thus increasing their reactivity as acceptors for peptidyl transferase. This is Elongation factor P from Shewanella frigidimarina (strain NCIMB 400).